The chain runs to 297 residues: Polyamine aminopropyltransferase 2 (297 aa).

In terms of domain architecture, PABS spans 26 to 258; sequence FYWEPDVEGG…DLWTFFVALK (233 aa). An S-methyl-5'-thioadenosine-binding site is contributed by glutamine 53. Positions 84 and 108 each coordinate spermidine. S-methyl-5'-thioadenosine-binding positions include aspartate 128 and 157 to 158; that span reads DV. Residue aspartate 176 is the Proton acceptor of the active site. Proline 184 contacts S-methyl-5'-thioadenosine.

This sequence belongs to the spermidine/spermine synthase family. Homodimer or homotetramer.

Its subcellular location is the cytoplasm. It catalyses the reaction S-adenosyl 3-(methylsulfanyl)propylamine + putrescine = S-methyl-5'-thioadenosine + spermidine + H(+). It functions in the pathway amine and polyamine biosynthesis; spermidine biosynthesis; spermidine from putrescine: step 1/1. Functionally, catalyzes the irreversible transfer of a propylamine group from the amino donor S-adenosylmethioninamine (decarboxy-AdoMet) to putrescine (1,4-diaminobutane) to yield spermidine. The polypeptide is Polyamine aminopropyltransferase 2 (Caldanaerobacter subterraneus subsp. tengcongensis (strain DSM 15242 / JCM 11007 / NBRC 100824 / MB4) (Thermoanaerobacter tengcongensis)).